The following is a 527-amino-acid chain: Mitogen-activated protein kinase kinae MKK2 (527 aa).

2 disordered regions span residues 1-143 (MHDQ…SAGS) and 156-189 (IGSTRPQGTPDPASAVGSIYSERSDGGAGMDKDG). Residues 107–129 (QQGQSASGGSESSAAHSRSGSFG) are compositionally biased toward low complexity. A compositionally biased stretch (polar residues) spans 134 to 143 (RTSNPTSAGS). A compositionally biased stretch (basic and acidic residues) spans 177–189 (ERSDGGAGMDKDG). The Protein kinase domain maps to 227–497 (IVELGGLGEG…PWRMLEHPWM (271 aa)). ATP-binding positions include 233-241 (LGEGAGGAV) and Lys256.

It belongs to the protein kinase superfamily. STE Ser/Thr protein kinase family. MAP kinase kinase subfamily. In terms of assembly, interacts with the adapter protein MST50.

The catalysed reaction is L-seryl-[protein] + ATP = O-phospho-L-seryl-[protein] + ADP + H(+). The enzyme catalyses L-threonyl-[protein] + ATP = O-phospho-L-threonyl-[protein] + ADP + H(+). Its function is as follows. Mitogen-activated protein kinase kinase; part of the MCK1-MKK2-MPS1 MAP kinase (MAPK) signal transduction cascade that is essential for appressorium formation, penetration and invasive growth. Beside its role in pathogenesis, the MPS1 cascade is active in conidiation and cellular stress responses. Targets downstream of the the MPS1-MAPK pathway include transcription factors MIG1 and SWI6, as well as GSK1 and MPG1. The sequence is that of Mitogen-activated protein kinase kinae MKK2 from Pyricularia oryzae (strain 70-15 / ATCC MYA-4617 / FGSC 8958) (Rice blast fungus).